The following is a 346-amino-acid chain: Acetylpolyamine amidohydrolase 1 (346 aa).

H161 acts as the Proton donor/acceptor in catalysis. 3 residues coordinate Zn(2+): D197, H199, and D286.

Belongs to the histone deacetylase family. As to quaternary structure, homodimer. Zn(2+) serves as cofactor.

The catalysed reaction is N-acetylputrescine + H2O = putrescine + acetate. The enzyme catalyses N-acetylcadaverine + H2O = cadaverine + acetate. It carries out the reaction N(1)-acetylspermine + H2O = spermine + acetate. It catalyses the reaction N(1)-acetylspermidine + H2O = spermidine + acetate. Its pathway is amine and polyamine metabolism. Its function is as follows. Catalyzes the deacetylation of acetylated polyamines such as N-acetylputrescine, N-acetylcadaverine, N(1)-acetylspermine and N(1)-acetylspermidine. Plays an important role in the metabolism of acetylated polyamines in P.aeruginosa. Is involved in the degradation pathways of N-acetylputrescine and N-acetylcadaverine, that allow P.aeruginosa to utilize these acetylpolyamines as a carbon source under glucose starvation. In vitro, can also hydrolyze artificial trifluoroacetylated and acetylated lysine-derivatives. This is Acetylpolyamine amidohydrolase 1 from Pseudomonas aeruginosa (strain ATCC 15692 / DSM 22644 / CIP 104116 / JCM 14847 / LMG 12228 / 1C / PRS 101 / PAO1).